Reading from the N-terminus, the 206-residue chain is Triafestin-2 (206 aa).

The N-terminal stretch at 1 to 18 is a signal peptide; the sequence is MKTILAVIFFGILAFAFA. Residues N25, N55, and N178 are each glycosylated (N-linked (GlcNAc...) asparagine).

Belongs to the calycin superfamily. Triabin family. As to quaternary structure, interacts with host coagulation factor XII (F12) (inactive and activated) (via amino acids 1-77). Interacts with host high molecular weight kininogen (KNG1) (via amino acids 402-532). In terms of tissue distribution, salivary gland (at protein level).

It is found in the secreted. Zn(2+) modulates binding to host coagulation factor XII (F12) and high molecular weight kininogen (KNG1). Suppresses activation of the host plasma kallikrein-kinin system, leading to inhibition of the intrinsic coagulation pathway. Blocks host coagulation factor XII (F12) and prekallikrein (KLKB1) reciprocal activation without affecting their amidolytic activities. Blocks binding of host F12 and high molecular weight kininogen (KNG1) to negatively charged surfaces. Attenuates generation of bradykinin by interfering with activation of host kallikrein-kinin system. This chain is Triafestin-2, found in Triatoma infestans (Assassin bug).